The following is a 266-amino-acid chain: Small ribosomal subunit protein eS1 (266 aa).

Residues 236–266 (GAGTAAKATGDDTGAKVERADGYEPPIQESV) form a disordered region. Over residues 244 to 257 (TGDDTGAKVERADG) the composition is skewed to basic and acidic residues.

Belongs to the eukaryotic ribosomal protein eS1 family. As to quaternary structure, component of the small ribosomal subunit. Mature ribosomes consist of a small (40S) and a large (60S) subunit. The 40S subunit contains about 33 different proteins and 1 molecule of RNA (18S). The 60S subunit contains about 49 different proteins and 3 molecules of RNA (28S, 5.8S and 5S). Part of the small subunit (SSU) processome, composed of more than 70 proteins and the RNA chaperone small nucleolar RNA (snoRNA) U3.

Its subcellular location is the cytoplasm. The protein localises to the nucleus. It localises to the nucleolus. Its function is as follows. Component of the small ribosomal subunit. The ribosome is a large ribonucleoprotein complex responsible for the synthesis of proteins in the cell. Part of the small subunit (SSU) processome, first precursor of the small eukaryotic ribosomal subunit. During the assembly of the SSU processome in the nucleolus, many ribosome biogenesis factors, an RNA chaperone and ribosomal proteins associate with the nascent pre-rRNA and work in concert to generate RNA folding, modifications, rearrangements and cleavage as well as targeted degradation of pre-ribosomal RNA by the RNA exosome. May play a role during erythropoiesis. The sequence is that of Small ribosomal subunit protein eS1 (rps3a) from Tetraodon nigroviridis (Spotted green pufferfish).